A 208-amino-acid chain; its full sequence is Uracil phosphoribosyltransferase (208 aa).

5-phospho-alpha-D-ribose 1-diphosphate is bound by residues arginine 78, arginine 103, and 130–138 (DPMLATGGS). Residues isoleucine 193 and 198 to 200 (GDA) each bind uracil. Aspartate 199 lines the 5-phospho-alpha-D-ribose 1-diphosphate pocket.

This sequence belongs to the UPRTase family. It depends on Mg(2+) as a cofactor.

The enzyme catalyses UMP + diphosphate = 5-phospho-alpha-D-ribose 1-diphosphate + uracil. Its pathway is pyrimidine metabolism; UMP biosynthesis via salvage pathway; UMP from uracil: step 1/1. Allosterically activated by GTP. Its function is as follows. Catalyzes the conversion of uracil and 5-phospho-alpha-D-ribose 1-diphosphate (PRPP) to UMP and diphosphate. The protein is Uracil phosphoribosyltransferase of Pasteurella multocida (strain Pm70).